Consider the following 241-residue polypeptide: N-acetylmuramoyl-L-alanine amidase Rv3717 (241 aa).

Residues 1 to 24 (MIVGVLVAAATPIISSASATPANI) form the signal peptide. The MurNAc-LAA domain occupies 29–230 (VFIDPGHNGA…KYANALVRGV (202 aa)). His35 serves as a coordination point for Zn(2+). A disordered region spans residues 45–69 (RQVPTGRGGTKNCQASGTSTNSGYP). Residues 55-67 (KNCQASGTSTNSG) show a composition bias toward polar residues. The cysteines at positions 57 and 105 are disulfide-linked. Zn(2+) contacts are provided by Glu70 and His125. The active-site Proton donor/acceptor is Glu200.

This sequence belongs to the N-acetylmuramoyl-L-alanine amidase 3 family. Monomer. It depends on Zn(2+) as a cofactor.

It is found in the periplasm. It carries out the reaction Hydrolyzes the link between N-acetylmuramoyl residues and L-amino acid residues in certain cell-wall glycopeptides.. The protein operates within cell wall degradation; peptidoglycan degradation. Its activity is regulated as follows. The structure reveals a short flexible hairpin turn that partially occludes the active site and may be involved in autoregulation. Cell-wall hydrolase that hydrolyzes the amide bond between N-acetylmuramic acid and L-alanine in cell-wall glycopeptides. Is able to hydrolyze the cell walls of several bacterial species (i.e. Paenibacillus sp., B.avium, E.coli DH5alpha, E.aerogenes, L.acidophilus, B.thuringiensis, B.pumilus, B.subtilis and E.coli W3110), thereby showing that it is a cell-wall hydrolase with broad-spectrum activity. May have a role in peptidoglycan fragment recycling. The sequence is that of N-acetylmuramoyl-L-alanine amidase Rv3717 from Mycobacterium tuberculosis (strain ATCC 25618 / H37Rv).